The chain runs to 485 residues: Probable high-affinity nitrate transporter 2.4 (485 aa).

12 helical membrane-spanning segments follow: residues 56 to 76, 80 to 100, 119 to 139, 147 to 167, 177 to 197, 215 to 235, 270 to 290, 305 to 327, 341 to 361, 377 to 397, 405 to 425, and 435 to 455; these read WMSL…LPAM, LVLA…ATLV, GVAS…ASSP, FVAG…SRIF, AVAA…MPVA, VTYL…LAFP, AWLL…MENV, AAGA…GGVA, LWAL…VGRM, VACA…VPFV, VSGM…RLFF, and AISC…LIHF.

The protein belongs to the major facilitator superfamily. Nitrate/nitrite porter (TC 2.A.1.8) family. In terms of tissue distribution, expressed in the base of the lateral root primordia, root-shoot junction zone, leaves, ends of the husk and vascular tissue of the anthers.

Its subcellular location is the cell membrane. In terms of biological role, involved in nitrate transport. In Oryza sativa subsp. japonica (Rice), this protein is Probable high-affinity nitrate transporter 2.4 (NRT2.4).